A 330-amino-acid chain; its full sequence is Biotin synthase 2 (330 aa).

Residues 48-278 (MCGDGFDMCS…QAAIRLAGGR (231 aa)) form the Radical SAM core domain. 3 residues coordinate [4Fe-4S] cluster: Cys-66, Cys-70, and Cys-73. Positions 111, 143, 203, and 273 each coordinate [2Fe-2S] cluster.

Belongs to the radical SAM superfamily. Biotin synthase family. In terms of assembly, homodimer. Requires [4Fe-4S] cluster as cofactor. [2Fe-2S] cluster is required as a cofactor.

The enzyme catalyses (4R,5S)-dethiobiotin + (sulfur carrier)-SH + 2 reduced [2Fe-2S]-[ferredoxin] + 2 S-adenosyl-L-methionine = (sulfur carrier)-H + biotin + 2 5'-deoxyadenosine + 2 L-methionine + 2 oxidized [2Fe-2S]-[ferredoxin]. It participates in cofactor biosynthesis; biotin biosynthesis; biotin from 7,8-diaminononanoate: step 2/2. In terms of biological role, catalyzes the conversion of dethiobiotin (DTB) to biotin by the insertion of a sulfur atom into dethiobiotin via a radical-based mechanism. This Corynebacterium diphtheriae (strain ATCC 700971 / NCTC 13129 / Biotype gravis) protein is Biotin synthase 2.